Here is a 116-residue protein sequence, read N- to C-terminus: Large ribosomal subunit protein uL18 (116 aa).

Belongs to the universal ribosomal protein uL18 family. Part of the 50S ribosomal subunit; part of the 5S rRNA/L5/L18/L25 subcomplex. Contacts the 5S and 23S rRNAs.

Functionally, this is one of the proteins that bind and probably mediate the attachment of the 5S RNA into the large ribosomal subunit, where it forms part of the central protuberance. The polypeptide is Large ribosomal subunit protein uL18 (Cellvibrio japonicus (strain Ueda107) (Pseudomonas fluorescens subsp. cellulosa)).